Consider the following 204-residue polypeptide: Inactive ribonuclease-like protein 9 (204 aa).

A signal peptide spans 1–26; that stretch reads MMRTPITTHPLLLLLLLQQLLQPVQF. Disulfide bonds link C97/C152, C115/C167, and C122/C129. Residues N130 and N142 are each glycosylated (N-linked (GlcNAc...) asparagine).

This sequence belongs to the pancreatic ribonuclease family.

It localises to the secreted. Does not exhibit any ribonuclease activity. The protein is Inactive ribonuclease-like protein 9 (RNASE9) of Macaca nemestrina (Pig-tailed macaque).